Here is a 211-residue protein sequence, read N- to C-terminus: Holliday junction branch migration complex subunit RuvA (211 aa).

Residues 1 to 70 are domain I; the sequence is MIQFLQGQVV…QDQIALFGFG (70 aa). The segment at 71–149 is domain II; that stretch reads RLAERDLFGQ…QWHKLQMGTG (79 aa). The tract at residues 150-158 is flexible linker; sequence ETDSTLPTT. Residues 158-211 are domain III; that stretch reads TALLEDLEMTLLALGYTQTEIQQAIAMVSQVPDVAQSEDPEVWIRQAIGWLSDH.

Belongs to the RuvA family. As to quaternary structure, homotetramer. Forms an RuvA(8)-RuvB(12)-Holliday junction (HJ) complex. HJ DNA is sandwiched between 2 RuvA tetramers; dsDNA enters through RuvA and exits via RuvB. An RuvB hexamer assembles on each DNA strand where it exits the tetramer. Each RuvB hexamer is contacted by two RuvA subunits (via domain III) on 2 adjacent RuvB subunits; this complex drives branch migration. In the full resolvosome a probable DNA-RuvA(4)-RuvB(12)-RuvC(2) complex forms which resolves the HJ.

Its subcellular location is the cytoplasm. The RuvA-RuvB-RuvC complex processes Holliday junction (HJ) DNA during genetic recombination and DNA repair, while the RuvA-RuvB complex plays an important role in the rescue of blocked DNA replication forks via replication fork reversal (RFR). RuvA specifically binds to HJ cruciform DNA, conferring on it an open structure. The RuvB hexamer acts as an ATP-dependent pump, pulling dsDNA into and through the RuvAB complex. HJ branch migration allows RuvC to scan DNA until it finds its consensus sequence, where it cleaves and resolves the cruciform DNA. This chain is Holliday junction branch migration complex subunit RuvA, found in Synechocystis sp. (strain ATCC 27184 / PCC 6803 / Kazusa).